The sequence spans 108 residues: Cytochrome c-555 (108 aa).

Residues 1–22 (MSRFVSAALVGAALLVSGNAFA) form the signal peptide. Positions 36, 39, 40, and 82 each coordinate heme c.

Binds 1 heme c group covalently per subunit.

Its function is as follows. This basic c-type monoheme cytochrome has been found exclusively in the green photosynthetic bacteria, although its role in bacterial photosynthesis is not established. It has an unusually low redox potential compared with mitochondrial cytochrome c. It is reactive with cytochrome c oxidases but not with reductases. In Chlorobaculum tepidum (strain ATCC 49652 / DSM 12025 / NBRC 103806 / TLS) (Chlorobium tepidum), this protein is Cytochrome c-555.